The primary structure comprises 495 residues: Phenylalanine--tRNA ligase alpha subunit (495 aa).

L-phenylalanine-binding positions include threonine 338, 377-379, and tyrosine 417; that span reads QLE. Glutamate 419 contacts Mg(2+). Residue phenylalanine 442 coordinates L-phenylalanine.

Belongs to the class-II aminoacyl-tRNA synthetase family. Phe-tRNA synthetase alpha subunit type 2 subfamily. As to quaternary structure, tetramer of two alpha and two beta subunits. Mg(2+) is required as a cofactor.

The protein localises to the cytoplasm. The enzyme catalyses tRNA(Phe) + L-phenylalanine + ATP = L-phenylalanyl-tRNA(Phe) + AMP + diphosphate + H(+). The protein is Phenylalanine--tRNA ligase alpha subunit of Methanosarcina mazei (strain ATCC BAA-159 / DSM 3647 / Goe1 / Go1 / JCM 11833 / OCM 88) (Methanosarcina frisia).